The sequence spans 572 residues: Proline--tRNA ligase (572 aa).

This sequence belongs to the class-II aminoacyl-tRNA synthetase family. ProS type 1 subfamily. As to quaternary structure, homodimer.

It is found in the cytoplasm. The catalysed reaction is tRNA(Pro) + L-proline + ATP = L-prolyl-tRNA(Pro) + AMP + diphosphate. In terms of biological role, catalyzes the attachment of proline to tRNA(Pro) in a two-step reaction: proline is first activated by ATP to form Pro-AMP and then transferred to the acceptor end of tRNA(Pro). As ProRS can inadvertently accommodate and process non-cognate amino acids such as alanine and cysteine, to avoid such errors it has two additional distinct editing activities against alanine. One activity is designated as 'pretransfer' editing and involves the tRNA(Pro)-independent hydrolysis of activated Ala-AMP. The other activity is designated 'posttransfer' editing and involves deacylation of mischarged Ala-tRNA(Pro). The misacylated Cys-tRNA(Pro) is not edited by ProRS. This is Proline--tRNA ligase from Klebsiella pneumoniae (strain 342).